The primary structure comprises 531 residues: Transporter mfs1 (531 aa).

A run of 10 helical transmembrane segments spans residues Leu83–Phe103, Val119–Phe139, Leu158–Leu178, Phe182–Ile202, Phe214–Val234, Trp241–Met261, Ile325–Phe345, Leu358–Leu378, Ile398–Trp418, and Val424–Phe444. An N-linked (GlcNAc...) asparagine glycan is attached at Asn486. A helical transmembrane segment spans residues Gly496–Ile516.

Belongs to the major facilitator superfamily. CAR1 family.

It is found in the endoplasmic reticulum. It localises to the membrane. The chain is Transporter mfs1 (mfs1) from Schizosaccharomyces pombe (strain 972 / ATCC 24843) (Fission yeast).